We begin with the raw amino-acid sequence, 313 residues long: Metaxin-3 (313 aa).

A disordered region spans residues 280–313 (EKMDDNLRSSPQHRPHRHEAKPSAPASDRNSTPA).

This sequence belongs to the metaxin family. In terms of assembly, part of a large protein complex spanning both mitochondrial membranes termed the mitochondrial intermembrane space bridging (MIB) complex.

Its subcellular location is the mitochondrion. It localises to the mitochondrion outer membrane. Functionally, could function in transport of proteins into the mitochondrion. The protein is Metaxin-3 (mtx3) of Danio rerio (Zebrafish).